Consider the following 560-residue polypeptide: Trafficking protein particle complex II-specific subunit 65 (560 aa).

The disordered stretch occupies residues 164-193 (SSKNTNNHLEKNNRATHRVSSKNSEVHEAD). Residues serine 393 and serine 398 each carry the phosphoserine modification.

In terms of assembly, part of the multisubunit TRAPP (transport protein particle) II complex composed of BET3, BET5, TRS20, TRS23, TRS31, TRS33, TRS65, TRS120 and TRS130. Interacts directly with TRS120 and TRS130.

The protein resides in the cytoplasm. The protein localises to the golgi apparatus. It localises to the cis-Golgi network. It functions in the pathway glycan metabolism; beta-glucan biosynthesis. Its function is as follows. Specific subunit of the TRAPP II complex, a highly conserved vesicle tethering complex that functions in the late Golgi as a guanine nucleotide exchanger (GEF) for the Golgi YPT1 GTPase. TRS65 plays a role in the YPT GEF activity of TRAPP II in concert with the two other TRAPP II-specific subunits TRS120 and TRS130. Involved in cell wall (1--&gt;6)-beta-glucan synthesis. This is Trafficking protein particle complex II-specific subunit 65 (TRS65) from Saccharomyces cerevisiae (strain ATCC 204508 / S288c) (Baker's yeast).